Reading from the N-terminus, the 138-residue chain is Protein NrdI (138 aa).

This sequence belongs to the NrdI family.

Functionally, probably involved in ribonucleotide reductase function. The chain is Protein NrdI from Beutenbergia cavernae (strain ATCC BAA-8 / DSM 12333 / CCUG 43141 / JCM 11478 / NBRC 16432 / NCIMB 13614 / HKI 0122).